We begin with the raw amino-acid sequence, 415 residues long: Serine hydroxymethyltransferase (415 aa).

(6S)-5,6,7,8-tetrahydrofolate-binding positions include L117 and 121–123 (GHL). At K225 the chain carries N6-(pyridoxal phosphate)lysine. 349-351 (SPF) provides a ligand contact to (6S)-5,6,7,8-tetrahydrofolate.

It belongs to the SHMT family. In terms of assembly, homodimer. Pyridoxal 5'-phosphate serves as cofactor.

It is found in the cytoplasm. The enzyme catalyses (6R)-5,10-methylene-5,6,7,8-tetrahydrofolate + glycine + H2O = (6S)-5,6,7,8-tetrahydrofolate + L-serine. It functions in the pathway one-carbon metabolism; tetrahydrofolate interconversion. The protein operates within amino-acid biosynthesis; glycine biosynthesis; glycine from L-serine: step 1/1. Catalyzes the reversible interconversion of serine and glycine with tetrahydrofolate (THF) serving as the one-carbon carrier. This reaction serves as the major source of one-carbon groups required for the biosynthesis of purines, thymidylate, methionine, and other important biomolecules. Also exhibits THF-independent aldolase activity toward beta-hydroxyamino acids, producing glycine and aldehydes, via a retro-aldol mechanism. The chain is Serine hydroxymethyltransferase from Nitratiruptor sp. (strain SB155-2).